Consider the following 383-residue polypeptide: MAVGRPKRVMIVAGEASGDIYGAGLVRAVQAADPAFSFFGIGGPRMREAGCETLVDSADMAVVGLVEVLKHFDVIAAAFLKLKKILLEDPPDLLILIDYPGFNLRLGKVAKKAGVKVLYYISPQIWAWRQGRVKKIKRLVDHMAVILPFEVPFYEQAGVPVSFVGHPMADLVEVSLTRDQAATSFGLDTSRQIVGLFPGSRRSEVSRLLPTILEAARLLQQCLPGLQFVLPLASTLSDDDLAPWLEGCELPITVTRDRIHDLMRACDAVISVSGTVTLEIALVGTPLVIIYKLSPLTFQLAKRLVKVEHIGLCNIVAGETVARELIQEEASPEQIAGEIGRLLRDAEYNTAFRERLTHVRERLGGGGADRRMAGLVLSMVEQS.

This sequence belongs to the LpxB family.

It carries out the reaction a lipid X + a UDP-2-N,3-O-bis[(3R)-3-hydroxyacyl]-alpha-D-glucosamine = a lipid A disaccharide + UDP + H(+). Its pathway is bacterial outer membrane biogenesis; LPS lipid A biosynthesis. In terms of biological role, condensation of UDP-2,3-diacylglucosamine and 2,3-diacylglucosamine-1-phosphate to form lipid A disaccharide, a precursor of lipid A, a phosphorylated glycolipid that anchors the lipopolysaccharide to the outer membrane of the cell. The polypeptide is Lipid-A-disaccharide synthase (Trichlorobacter lovleyi (strain ATCC BAA-1151 / DSM 17278 / SZ) (Geobacter lovleyi)).